A 942-amino-acid chain; its full sequence is E3 ubiquitin-protein ligase HACE1 (942 aa).

ANK repeat units follow at residues 23-55 (LPDDNETAVYTLMPMVMADQHRSVSELLSNSKF), 64-93 (VKRSLLHIAANCGSVECLVLLLKKGANPNY), 97-126 (SGCTPLHLAARNGQKKCMSKLLEYSADVNI), 130-159 (EGLTAIHWLAVNGRTELLHDLVQHVSNVDV), 163-192 (MGQTALHVACQNGHKTTVQCLLDSGADINR), 196-226 (SGATPLYFACSHGQRDTAQILLMRGAKYLPD), and 228-253 (NGITPLDLCVQGGYGETCEVLIQYHP). Residues 428-459 (KGPDHQDATPTPSFAAAGTESRKELSTDTGDS) are disordered. Positions 447–459 (ESRKELSTDTGDS) are enriched in basic and acidic residues. Residues 607 to 942 (NCAKLKQGIA…HCGSYGYTMA (336 aa)) form the HECT domain. The active-site Glycyl thioester intermediate is the cysteine 909.

It localises to the golgi apparatus. Its subcellular location is the golgi stack membrane. The protein resides in the cytoplasm. The protein localises to the endoplasmic reticulum. The catalysed reaction is S-ubiquitinyl-[E2 ubiquitin-conjugating enzyme]-L-cysteine + [acceptor protein]-L-lysine = [E2 ubiquitin-conjugating enzyme]-L-cysteine + N(6)-ubiquitinyl-[acceptor protein]-L-lysine.. It participates in protein modification; protein ubiquitination. Its function is as follows. E3 ubiquitin-protein ligase involved in Golgi membrane fusion and regulation of small GTPases. Acts as a regulator of Golgi membrane dynamics during the cell cycle: recruited to Golgi membrane by Rab proteins and regulates postmitotic Golgi membrane fusion. Acts by mediating ubiquitination during mitotic Golgi disassembly, ubiquitination serving as a signal for Golgi reassembly later, after cell division. In Gallus gallus (Chicken), this protein is E3 ubiquitin-protein ligase HACE1 (HACE1).